The chain runs to 295 residues: ATP synthase subunit a (295 aa).

7 consecutive transmembrane segments (helical) span residues 41–61 (KWSALTLFVALFVGGFLWLGF), 101–121 (YLTILFCFILVSNVMAVIPVA), 129–149 (IALPMILAAVSWFIFNIVGIR), 161–181 (LVPAPTAPLFVKVILAPIEFV), 191–211 (LAIRLFANMFAGHMLLLVFAL), 222–242 (FVFGLVSGLMAIALTLFELMI), and 244–264 (VLQAYIFTVLTAAYIGGAISS).

The protein belongs to the ATPase A chain family. F-type ATPases have 2 components, CF(1) - the catalytic core - and CF(0) - the membrane proton channel. CF(1) has five subunits: alpha(3), beta(3), gamma(1), delta(1), epsilon(1). CF(0) has three main subunits: a(1), b(2) and c(9-12). The alpha and beta chains form an alternating ring which encloses part of the gamma chain. CF(1) is attached to CF(0) by a central stalk formed by the gamma and epsilon chains, while a peripheral stalk is formed by the delta and b chains.

The protein resides in the cell membrane. Functionally, key component of the proton channel; it plays a direct role in the translocation of protons across the membrane. This chain is ATP synthase subunit a, found in Parafrankia sp. (strain EAN1pec).